Consider the following 1441-residue polypeptide: Cleavage and polyadenylation specificity factor subunit 1 (1441 aa).

Disordered regions lie at residues 404–435, 545–569, 713–775, and 899–921; these read PASSVREAADKEEPPSKKKRVEPAVGWTGGKT, EEETPKAESTEQEPSAPKAEEDGRR, GGAR…PAPF, and FREKKPKPSKKKAEGCSTEEGSG. Positions 410 to 419 are enriched in basic and acidic residues; that stretch reads EAADKEEPPS. Residues Ser-754 and Ser-764 each carry the phosphoserine modification. Residues 756-773 show a composition bias toward basic and acidic residues; the sequence is SKEEARRSSQPPADRDPA.

The protein belongs to the CPSF1 family. Component of the cleavage and polyadenylation specificity factor (CPSF) complex, composed of CPSF1, CPSF2, CPSF3, CPSF4 and FIP1L1. Found in a complex with CPSF1, FIP1L1 and PAPOLA. Interacts with FIP1L1 and SRRM1. Interacts with TUT1; the interaction is direct and mediates the recruitment of the CPSF complex on the 3'UTR of selected pre-mRNAs. Interacts with TENT2/GLD2.

It is found in the nucleus. It localises to the nucleoplasm. Component of the cleavage and polyadenylation specificity factor (CPSF) complex that plays a key role in pre-mRNA 3'-end formation, recognizing the AAUAAA signal sequence and interacting with poly(A) polymerase and other factors to bring about cleavage and poly(A) addition. This subunit is involved in the RNA recognition step of the polyadenylation reaction. May play a role in eye morphogenesis and the development of retinal ganglion cell projections to the midbrain. The sequence is that of Cleavage and polyadenylation specificity factor subunit 1 (Cpsf1) from Mus musculus (Mouse).